The primary structure comprises 52 residues: VEQNWATLQGGEMTIQTTQASEATQAVASLAEAAVAASQEMQQGATVTMALN.

The protein belongs to the NRF1/Ewg family. Homodimer. Binds DNA as a dimer. Interacts with PPRC1. In terms of processing, phosphorylation enhances DNA binding. In terms of tissue distribution, expressed at high levels in the lung and testis, at intermediate levels in the kidney, heart and brain and at low levels in the muscle and liver.

The protein localises to the nucleus. Functionally, transcription factor that activates the expression of the EIF2S1 (EIF2-alpha) gene. Links the transcriptional modulation of key metabolic genes to cellular growth and development. Implicated in the control of nuclear genes required for respiration, heme biosynthesis, and mitochondrial DNA transcription and replication. The sequence is that of Nuclear respiratory factor 1 (Nrf1) from Rattus norvegicus (Rat).